A 357-amino-acid chain; its full sequence is GPI mannosyltransferase 2 (357 aa).

8 helical membrane-spanning segments follow: residues 6 to 26 (TLIV…LVVP), 86 to 106 (AIAY…ALML), 128 to 148 (ILSP…FALL), 167 to 187 (VLGA…PFLF), 201 to 221 (GVSV…TQYL), 257 to 277 (YWTA…YLMY), 286 to 306 (LVPF…MWHV), and 334 to 354 (YVVR…GAYL).

The protein belongs to the PIGV family.

The protein localises to the endoplasmic reticulum membrane. The protein operates within glycolipid biosynthesis; glycosylphosphatidylinositol-anchor biosynthesis. Its function is as follows. Mannosyltransferase involved in glycosylphosphatidylinositol-anchor biosynthesis. Transfers the second mannose to the glycosylphosphatidylinositol during GPI precursor assembly. The polypeptide is GPI mannosyltransferase 2 (GPI18) (Yarrowia lipolytica (strain CLIB 122 / E 150) (Yeast)).